Reading from the N-terminus, the 726-residue chain is Capsid scaffolding protein (726 aa).

Residues histidine 53, serine 140, and histidine 159 each act as charge relay system in the active site. Residues glutamine 321–threonine 362 are disordered. The span at alanine 352–proline 361 shows a compositional bias: pro residues. Positions threonine 365–glutamine 384 are interaction with pAP. Disordered regions lie at residues alanine 385–serine 427, arginine 472–alanine 492, arginine 568–serine 644, and glycine 668–glutamate 726. Over residues histidine 402–proline 418 the composition is skewed to polar residues. Residues lysine 702 to alanine 720 show a composition bias toward basic and acidic residues. Residues serine 706–glutamate 726 form an interaction with major capsid protein region.

It belongs to the herpesviridae capsid scaffolding protein family. As to quaternary structure, homomultimer. Interacts with major capsid protein. In terms of assembly, exists in a monomer-dimer equilibrium with the dimer being the active species. Capsid scaffolding protein is cleaved by assemblin after formation of the spherical procapsid. As a result, the capsid obtains its mature, icosahedral shape. Cleavages occur at two or more sites: release (R-site) and maturation (M-site).

It is found in the host cytoplasm. The protein resides in the host nucleus. It carries out the reaction Cleaves -Ala-|-Ser- and -Ala-|-Ala- bonds in the scaffold protein.. Its function is as follows. Acts as a scaffold protein by binding major capsid protein in the cytoplasm, inducing the nuclear localization of both proteins. Multimerizes in the nucleus such as major capsid protein forms the icosahedral T=16 capsid. Autocatalytic cleavage releases the assembly protein, and subsequently abolishes interaction with major capsid protein. Cleavages products are evicted from the capsid before or during DNA packaging. In terms of biological role, protease that plays an essential role in virion assembly within the nucleus. Catalyzes the cleavage of the assembly protein after formation of the spherical procapsid. By that cleavage, the capsid matures and gains its icosahedral shape. The cleavage sites seem to include -Ala-Ser-, -Ala-Ala-, as well as Ala-Thr bonds. Assemblin and cleavages products are evicted from the capsid before or during DNA packaging. Plays a major role in capsid assembly. Acts as a scaffold protein by binding major capsid protein. Multimerizes in the nucleus such as major capsid protein forms the icosahedral T=16 capsid. Cleaved by assemblin after capsid completion. The cleavages products are evicted from the capsid before or during DNA packaging. The protein is Capsid scaffolding protein (UL26) of Psittacid herpesvirus 1 (isolate Amazon parrot/-/97-0001/1997) (PsHV-1).